The following is a 148-amino-acid chain: 3-dehydroquinate dehydratase (148 aa).

Tyrosine 23 acts as the Proton acceptor in catalysis. 3 residues coordinate substrate: asparagine 74, histidine 80, and aspartate 87. The Proton donor role is filled by histidine 100. Residues 101 to 102 (IS) and arginine 111 each bind substrate.

Belongs to the type-II 3-dehydroquinase family. As to quaternary structure, homododecamer.

It catalyses the reaction 3-dehydroquinate = 3-dehydroshikimate + H2O. It functions in the pathway metabolic intermediate biosynthesis; chorismate biosynthesis; chorismate from D-erythrose 4-phosphate and phosphoenolpyruvate: step 3/7. In terms of biological role, catalyzes a trans-dehydration via an enolate intermediate. In Anoxybacillus flavithermus (strain DSM 21510 / WK1), this protein is 3-dehydroquinate dehydratase.